The chain runs to 198 residues: Protein GrpE (198 aa).

The interval 1–56 is disordered; that stretch reads MVEKKKSQAEKNNQSATEEEIEKAVKGSKRDSNAADEKNSASAAASSSAVSDAEPA. Over residues 22–39 the composition is skewed to basic and acidic residues; the sequence is EKAVKGSKRDSNAADEKN. Residues 40–56 are compositionally biased toward low complexity; sequence SASAAASSSAVSDAEPA.

This sequence belongs to the GrpE family. Homodimer.

It is found in the cytoplasm. Participates actively in the response to hyperosmotic and heat shock by preventing the aggregation of stress-denatured proteins, in association with DnaK and GrpE. It is the nucleotide exchange factor for DnaK and may function as a thermosensor. Unfolded proteins bind initially to DnaJ; upon interaction with the DnaJ-bound protein, DnaK hydrolyzes its bound ATP, resulting in the formation of a stable complex. GrpE releases ADP from DnaK; ATP binding to DnaK triggers the release of the substrate protein, thus completing the reaction cycle. Several rounds of ATP-dependent interactions between DnaJ, DnaK and GrpE are required for fully efficient folding. In Oenococcus oeni (strain ATCC BAA-331 / PSU-1), this protein is Protein GrpE.